Reading from the N-terminus, the 319-residue chain is GATA transcription factor 18 (319 aa).

Positions 1-15 are enriched in low complexity; sequence MPDAAAAAAAAQDAD. The segment at 1–74 is disordered; sequence MPDAAAAAAA…AAPEPVSALL (74 aa). The span at 32–60 shows a compositional bias: acidic residues; sequence NNDDDGDDGTEEDEEEDDDEEGDEEELPP. Residues 74–109 form the Tify domain; it reads LPGSPNQLTLLFQGEVYVFESVTPEKVQAVLLLLGS. Positions 143-185 constitute a CCT domain; the sequence is RVASLIRFREKRKERNFDKKIRYAVRKEVALRMQRRKGQFAGR. Residues 215-242 form a GATA-type zinc finger; that stretch reads CQNCGTSEKMTPAMRRGPAGPRTLCNAC. The interval 292–319 is disordered; that stretch reads ITASHGEVMGDSTPANEAEIGAPKAQSQ.

The protein belongs to the type IV zinc-finger family. Class C subfamily.

The protein resides in the nucleus. Functionally, transcriptional activator that specifically binds 5'-GATA-3' or 5'-GAT-3' motifs within gene promoters. This is GATA transcription factor 18 from Oryza sativa subsp. indica (Rice).